We begin with the raw amino-acid sequence, 93 residues long: Small ribosomal subunit protein uS19 (93 aa).

The protein belongs to the universal ribosomal protein uS19 family.

Its function is as follows. Protein S19 forms a complex with S13 that binds strongly to the 16S ribosomal RNA. The chain is Small ribosomal subunit protein uS19 from Symbiobacterium thermophilum (strain DSM 24528 / JCM 14929 / IAM 14863 / T).